Reading from the N-terminus, the 139-residue chain is Large ribosomal subunit protein mL42 (139 aa).

The N-terminal 32 residues, methionine 1 to histidine 32, are a transit peptide targeting the mitochondrion.

This sequence belongs to the mitochondrion-specific ribosomal protein mL42 family. As to quaternary structure, component of the mitochondrial ribosome large subunit (39S) which comprises a 16S rRNA and about 50 distinct proteins. Component of the mitochondrial ribosome small subunit (28S) which comprises a 12S rRNA and about 30 distinct proteins.

It is found in the mitochondrion. The polypeptide is Large ribosomal subunit protein mL42 (MRPL42) (Pongo abelii (Sumatran orangutan)).